The following is a 201-amino-acid chain: Ribosomal RNA large subunit methyltransferase E (201 aa).

5 residues coordinate S-adenosyl-L-methionine: Gly49, Trp51, Asp69, Asp87, and Asp111. Lys151 acts as the Proton acceptor in catalysis.

It belongs to the class I-like SAM-binding methyltransferase superfamily. RNA methyltransferase RlmE family.

The protein localises to the cytoplasm. The catalysed reaction is uridine(2552) in 23S rRNA + S-adenosyl-L-methionine = 2'-O-methyluridine(2552) in 23S rRNA + S-adenosyl-L-homocysteine + H(+). Its function is as follows. Specifically methylates the uridine in position 2552 of 23S rRNA at the 2'-O position of the ribose in the fully assembled 50S ribosomal subunit. The polypeptide is Ribosomal RNA large subunit methyltransferase E (Nitratidesulfovibrio vulgaris (strain DSM 19637 / Miyazaki F) (Desulfovibrio vulgaris)).